Here is a 4499-residue protein sequence, read N- to C-terminus: Dynein alpha chain, flagellar outer arm (4499 aa).

The tract at residues 1–1677 is stem; it reads MSIFWEVPNA…RIRICDASFP (1677 aa). Kelch repeat units lie at residues 29–84, 86–135, 137–183, 199–245, 253–304, and 307–358; these read RFVL…ALDD, RLLV…RFGS, VFIF…RFDH, KLLI…VCDG, KVFS…FDVK, and SLLI…IRGL. One copy of the Filamin repeat lies at 425 to 534; that stretch reads FANTAARNCI…IRGSPFTVKC (110 aa). Kelch repeat units lie at residues 562–608 and 610–661; these read ELVL…VLSD and ELVV…AVSA. Residues 653 to 720 form a disordered region; that stretch reads PKGAAAVSAE…SRPVSAKPAP (68 aa). The segment covering 655–689 has biased composition (low complexity); that stretch reads GAAAVSAEPSAEPAAEPAAEPAAEPDADAPAAEPA. Residues 690-705 are compositionally biased toward acidic residues; the sequence is AEGEEGAVPAEGEEGA. Kelch repeat units follow at residues 750–801 and 864–913; these read LYVM…ATGN and KLFL…TLSG. Coiled coils occupy residues 1261 to 1334 and 1382 to 1450; these read ELHK…MIAN and KKEL…RRAF. 2 AAA regions span residues 1678 to 1921 and 1981 to 2225; these read YGYE…VLVV and DVIV…KSYS. Residues 1716-1723 and 2019-2026 contribute to the ATP site; these read GPAGTGKT and GPTGTGRT. One copy of the Kelch 11 repeat lies at 2269-2317; it reads MIWAFGGGLVEKDGIPYRRNFDKWFKQTWTTVKIPGKGTVYDYFVNPKT. 2 AAA regions span residues 2331–2577 and 2679–2928; these read DYDG…VFQG and EYNE…ERRY. Residue 2369–2376 coordinates ATP; sequence GGAGVGKT. A coiled-coil region spans residues 2655–2688; sequence LADKAYDEVADYTSLYKTLTEALNEYNETNAAMD. An ATP-binding site is contributed by 2717-2724; sequence GVGGSGKQ. Positions 3003–3023 form a coiled coil; sequence VGVEKEKVNAENAAAQVEAEK. The tract at residues 3003-3262 is stalk; the sequence is VGVEKEKVNA…ERWALTVEQL (260 aa). The Kelch 12 repeat unit spans residues 3070 to 3117; the sequence is LKKPPPGVDDITAVVIILLENNPKDKSWQAAQKLMNNVDKFLERVKSF. 2 coiled-coil regions span residues 3170 to 3262 and 3486 to 3515; these read DVVQ…VEQL and NKER…ELED. The tract at residues 3320 to 3550 is AAA 5; it reads LVDDALVAGW…AKRVSTEISE (231 aa). Residues 3614–3687 form a disordered region; the sequence is GRKKGKGLKK…VGDAEDEDDE (74 aa). Basic and acidic residues predominate over residues 3630 to 3653; it reads QPMDHQSLMEKARRSSGVGDRRPS. The AAA 6 stretch occupies residues 3843 to 4082; that stretch reads LQNFCEHMMG…LTTCGDVLYN (240 aa).

The protein belongs to the dynein heavy chain family. As to quaternary structure, consists of at least 3 heavy chains (alpha, beta and gamma), 2 intermediate chains and 8 light chains.

It is found in the cell projection. Its subcellular location is the cilium. The protein resides in the flagellum. It localises to the cytoplasm. The protein localises to the cytoskeleton. It is found in the flagellum axoneme. In terms of biological role, force generating protein of eukaryotic cilia and flagella. Produces force towards the minus ends of microtubules. Dynein has ATPase activity; the force-producing power stroke is thought to occur on release of ADP. The protein is Dynein alpha chain, flagellar outer arm (ODA11) of Chlamydomonas reinhardtii (Chlamydomonas smithii).